Consider the following 160-residue polypeptide: Protein-export protein SecB (160 aa).

It belongs to the SecB family. In terms of assembly, homotetramer, a dimer of dimers. One homotetramer interacts with 1 SecA dimer.

The protein resides in the cytoplasm. Its function is as follows. One of the proteins required for the normal export of preproteins out of the cell cytoplasm. It is a molecular chaperone that binds to a subset of precursor proteins, maintaining them in a translocation-competent state. It also specifically binds to its receptor SecA. This is Protein-export protein SecB from Agrobacterium fabrum (strain C58 / ATCC 33970) (Agrobacterium tumefaciens (strain C58)).